We begin with the raw amino-acid sequence, 161 residues long: 3-isopropylmalate dehydratase small subunit (161 aa).

The protein belongs to the LeuD family. LeuD type 2 subfamily. In terms of assembly, heterodimer of LeuC and LeuD.

It catalyses the reaction (2R,3S)-3-isopropylmalate = (2S)-2-isopropylmalate. The protein operates within amino-acid biosynthesis; L-leucine biosynthesis; L-leucine from 3-methyl-2-oxobutanoate: step 2/4. Its function is as follows. Catalyzes the isomerization between 2-isopropylmalate and 3-isopropylmalate, via the formation of 2-isopropylmaleate. The sequence is that of 3-isopropylmalate dehydratase small subunit from Pyrobaculum islandicum (strain DSM 4184 / JCM 9189 / GEO3).